The primary structure comprises 379 residues: MKRDLYETLGVQKNADEKELKSAFRKLAMKYHPDRNPGDQESEKSFKEINEAYETLKDPQKRAAYDRYGHAAFEQGGMGAGFGNGFAGGGAHGFSDIFEDIFGEMMGGRQRRSSGGRERGADLRYNMEISLEEAYSGKTAQIRVPTSITCDVCTGTGAKPGTSPKTCGTCQGTGRVRAAQGFFSIERTCPTCGGRGQTIADPCTKCHGQGRVVEERTLSVNIPAGIEDGTRIRLSGEGEAGLRGGPAGDLYIFLSVKPHEFYQRDGADLYCAVPISMTTAALGGKFDVTTLDGTKSRVTVPEGTQAGKQFRLKGKGMPVLRSSQTGDLYIQIQIETPQKLTKRQRELLQEFEQISSKENNPESTGFFSRMKDFFDTLSE.

Positions 4–69 (DLYETLGVQK…QKRAAYDRYG (66 aa)) constitute a J domain. The CR-type zinc finger occupies 137 to 215 (GKTAQIRVPT…CHGQGRVVEE (79 aa)). Residues Cys150, Cys153, Cys167, Cys170, Cys189, Cys192, Cys203, and Cys206 each contribute to the Zn(2+) site. 4 CXXCXGXG motif repeats span residues 150–157 (CDVCTGTG), 167–174 (CGTCQGTG), 189–196 (CPTCGGRG), and 203–210 (CTKCHGQG).

Belongs to the DnaJ family. In terms of assembly, homodimer. It depends on Zn(2+) as a cofactor.

It is found in the cytoplasm. Its function is as follows. Participates actively in the response to hyperosmotic and heat shock by preventing the aggregation of stress-denatured proteins and by disaggregating proteins, also in an autonomous, DnaK-independent fashion. Unfolded proteins bind initially to DnaJ; upon interaction with the DnaJ-bound protein, DnaK hydrolyzes its bound ATP, resulting in the formation of a stable complex. GrpE releases ADP from DnaK; ATP binding to DnaK triggers the release of the substrate protein, thus completing the reaction cycle. Several rounds of ATP-dependent interactions between DnaJ, DnaK and GrpE are required for fully efficient folding. Also involved, together with DnaK and GrpE, in the DNA replication of plasmids through activation of initiation proteins. This is Chaperone protein DnaJ from Rhizobium meliloti (strain 1021) (Ensifer meliloti).